The following is a 369-amino-acid chain: Bi-functional coumaroyl CoA and feruloyl CoA ortho-hydroxylase Diox1 (369 aa).

The Fe2OG dioxygenase domain maps to 209 to 319 (IREPMLVGSR…RISVPLFVNP (111 aa)). Y225 contributes to the 2-oxoglutarate binding site. Residues H240, D242, and H300 each contribute to the Fe cation site. 2 residues coordinate 2-oxoglutarate: R310 and S312.

This sequence belongs to the iron/ascorbate-dependent oxidoreductase family. L-ascorbate is required as a cofactor. It depends on Fe(2+) as a cofactor.

It catalyses the reaction (E)-4-coumaroyl-CoA + 2-oxoglutarate + O2 = (E)-2,4-dihydroxycinnamoyl-CoA + succinate + CO2. The catalysed reaction is (E)-feruloyl-CoA + 2-oxoglutarate + O2 = (E)-6-hydroxyferuloyl-CoA + succinate + CO2. It participates in phenylpropanoid metabolism. 2-oxoglutarate (OG)- and Fe(II)-dependent dioxygenase (2OGD) involved in scopoletin and umbelliferone biosynthesis. Converts feruloyl CoA into 6'-hydroxyferuloyl CoA, and p-coumaroyl CoA into 2,4-dihydroxycinnamoyl-CoA. In Ruta graveolens (Common rue), this protein is Bi-functional coumaroyl CoA and feruloyl CoA ortho-hydroxylase Diox1.